We begin with the raw amino-acid sequence, 311 residues long: Methenyltetrahydromethanopterin cyclohydrolase (311 aa).

It belongs to the MCH family.

Its subcellular location is the cytoplasm. The catalysed reaction is 5,10-methenyl-5,6,7,8-tetrahydromethanopterin + H2O = N(5)-formyl-5,6,7,8-tetrahydromethanopterin + H(+). Functionally, catalyzes the hydrolysis of methenyl-H(4)MPT(+) to 5-formyl-H(4)MPT. This is Methenyltetrahydromethanopterin cyclohydrolase from Halobacterium salinarum (strain ATCC 29341 / DSM 671 / R1).